The following is a 141-amino-acid chain: Nucleoside diphosphate kinase (141 aa).

The ATP site is built by lysine 11, phenylalanine 59, arginine 87, threonine 93, arginine 104, and asparagine 114. The Pros-phosphohistidine intermediate role is filled by histidine 117.

It belongs to the NDK family. Homotetramer. Requires Mg(2+) as cofactor.

Its subcellular location is the cytoplasm. It carries out the reaction a 2'-deoxyribonucleoside 5'-diphosphate + ATP = a 2'-deoxyribonucleoside 5'-triphosphate + ADP. The enzyme catalyses a ribonucleoside 5'-diphosphate + ATP = a ribonucleoside 5'-triphosphate + ADP. Functionally, major role in the synthesis of nucleoside triphosphates other than ATP. The ATP gamma phosphate is transferred to the NDP beta phosphate via a ping-pong mechanism, using a phosphorylated active-site intermediate. The polypeptide is Nucleoside diphosphate kinase (Halorhodospira halophila (strain DSM 244 / SL1) (Ectothiorhodospira halophila (strain DSM 244 / SL1))).